We begin with the raw amino-acid sequence, 249 residues long: Type III pantothenate kinase (249 aa).

Asp-6–Lys-13 is an ATP binding site. Residues Tyr-93 and Gly-100 to Arg-103 each bind substrate. Asp-102 serves as the catalytic Proton acceptor. Residue Asp-122 coordinates K(+). Thr-125 provides a ligand contact to ATP. Thr-181 contributes to the substrate binding site.

Belongs to the type III pantothenate kinase family. Homodimer. Requires NH4(+) as cofactor. K(+) is required as a cofactor.

The protein resides in the cytoplasm. It carries out the reaction (R)-pantothenate + ATP = (R)-4'-phosphopantothenate + ADP + H(+). It functions in the pathway cofactor biosynthesis; coenzyme A biosynthesis; CoA from (R)-pantothenate: step 1/5. Functionally, catalyzes the phosphorylation of pantothenate (Pan), the first step in CoA biosynthesis. The sequence is that of Type III pantothenate kinase from Pseudomonas fluorescens (strain Pf0-1).